Here is a 219-residue protein sequence, read N- to C-terminus: Cytidylate kinase (219 aa).

21–29 (GPAASGKGT) serves as a coordination point for ATP.

It belongs to the cytidylate kinase family. Type 1 subfamily.

The protein resides in the cytoplasm. The enzyme catalyses CMP + ATP = CDP + ADP. It carries out the reaction dCMP + ATP = dCDP + ADP. In Rickettsia prowazekii (strain Madrid E), this protein is Cytidylate kinase.